We begin with the raw amino-acid sequence, 444 residues long: 3-phosphoshikimate 1-carboxyvinyltransferase (444 aa).

Lys32, Ser33, and Arg37 together coordinate 3-phosphoshikimate. Lys32 contributes to the phosphoenolpyruvate binding site. Gly105 and Arg133 together coordinate phosphoenolpyruvate. 3-phosphoshikimate is bound by residues Ser178, Gln180, Asp326, and Lys353. Gln180 provides a ligand contact to phosphoenolpyruvate. Asp326 (proton acceptor) is an active-site residue. Positions 357 and 398 each coordinate phosphoenolpyruvate.

It belongs to the EPSP synthase family. As to quaternary structure, monomer.

The protein localises to the cytoplasm. The catalysed reaction is 3-phosphoshikimate + phosphoenolpyruvate = 5-O-(1-carboxyvinyl)-3-phosphoshikimate + phosphate. The protein operates within metabolic intermediate biosynthesis; chorismate biosynthesis; chorismate from D-erythrose 4-phosphate and phosphoenolpyruvate: step 6/7. Functionally, catalyzes the transfer of the enolpyruvyl moiety of phosphoenolpyruvate (PEP) to the 5-hydroxyl of shikimate-3-phosphate (S3P) to produce enolpyruvyl shikimate-3-phosphate and inorganic phosphate. The protein is 3-phosphoshikimate 1-carboxyvinyltransferase of Nitrosococcus oceani (strain ATCC 19707 / BCRC 17464 / JCM 30415 / NCIMB 11848 / C-107).